Consider the following 240-residue polypeptide: Methylthioribulose-1-phosphate dehydratase (240 aa).

Residues 1 to 17 are compositionally biased toward polar residues; it reads MAQEVENNNNDHLVQSS. The disordered stretch occupies residues 1–20; sequence MAQEVENNNNDHLVQSSDPE. Residue Cys100 coordinates substrate. Residues His117 and His119 each coordinate Zn(2+). The active-site Proton donor/acceptor is Glu146. His202 contacts Zn(2+).

Belongs to the aldolase class II family. MtnB subfamily. The cofactor is Zn(2+).

Its subcellular location is the cytoplasm. The catalysed reaction is 5-(methylsulfanyl)-D-ribulose 1-phosphate = 5-methylsulfanyl-2,3-dioxopentyl phosphate + H2O. The protein operates within amino-acid biosynthesis; L-methionine biosynthesis via salvage pathway; L-methionine from S-methyl-5-thio-alpha-D-ribose 1-phosphate: step 2/6. Its function is as follows. Catalyzes the dehydration of methylthioribulose-1-phosphate (MTRu-1-P) into 2,3-diketo-5-methylthiopentyl-1-phosphate (DK-MTP-1-P). This is Methylthioribulose-1-phosphate dehydratase from Neosartorya fischeri (strain ATCC 1020 / DSM 3700 / CBS 544.65 / FGSC A1164 / JCM 1740 / NRRL 181 / WB 181) (Aspergillus fischerianus).